The primary structure comprises 206 residues: VKLIYFNGRGRAEPIRMILVAAGVEFEDERIEFQDWPKIKPTIPGGRLPIVKITDKRGDVKTMSESLAIARFIARKHNMMGDTDDEYYIIEKMIGQVEDVESEYHKTLIKPPEEKEKISKEILNGKVPILLQAICETLKESTGNLTVGDKVTLADVVLIASIDHITDLDKEFLTGKYPEIHKHRKHLLATSPKLAKYLSERHATAF.

The GST N-terminal domain occupies 1-81 (VKLIYFNGRG…FIARKHNMMG (81 aa)). Glutathione contacts are provided by residues Tyr5, 5–6 (YF), Arg11, 36–40 (WPKIK), Leu48, 50–51 (IV), and 65–66 (ES). In terms of domain architecture, GST C-terminal spans 83–206 (TDDEYYIIEK…YLSERHATAF (124 aa)).

It belongs to the GST superfamily. Mu family. As to quaternary structure, homodimer.

The enzyme catalyses RX + glutathione = an S-substituted glutathione + a halide anion + H(+). Conjugation of reduced glutathione to a wide number of exogenous and endogenous hydrophobic electrophiles. Its function is as follows. GST isoenzymes appear to play a central role in the parasite detoxification system. Other functions are also suspected including a role in increasing the solubility of haematin in the parasite gut. The chain is Glutathione S-transferase class-mu 28 kDa isozyme from Schistosoma japonicum (Blood fluke).